Reading from the N-terminus, the 269-residue chain is MDTRRRVWPVAIITPHVTDVFAQRATLTRSLQLLSEFRYEQPYPARFYRALAADTVAMVGDLWLSTHGAPPVGRILLDVGSGSGYFAAAFADAGVRYIGVEPDPREMHAAGPALVPKAGAFVRASGMALPFADDAVDICLSSNVAEHVPQPWQLGNEMLRVTKPGGLVVLSYTIWLGPFGGHEMGLTHYLGGARAATRYVRKHGHRAKNDYGSSLFPVSAADGLNWAASTGVAVAAFPRYHPRWAWWLTSVPVLREFVVSNLVLVLRPR.

This sequence belongs to the methyltransferase superfamily.

This is an uncharacterized protein from Mycobacterium leprae (strain Br4923).